Reading from the N-terminus, the 453-residue chain is GTPase Der (453 aa).

EngA-type G domains are found at residues 4–169 (PIVA…PPVT) and 177–352 (IKIA…EEHK). GTP contacts are provided by residues 10 to 17 (GRPNVGKS), 57 to 61 (DTGGL), 120 to 123 (NKCE), 183 to 190 (GRPNVGKS), 230 to 234 (DTAGI), and 295 to 298 (NKWD). In terms of domain architecture, KH-like spans 353–438 (RRVSTSVINE…PIRLLWRSKK (86 aa)).

It belongs to the TRAFAC class TrmE-Era-EngA-EngB-Septin-like GTPase superfamily. EngA (Der) GTPase family. Associates with the 50S ribosomal subunit.

GTPase that plays an essential role in the late steps of ribosome biogenesis. This is GTPase Der from Nostoc sp. (strain PCC 7120 / SAG 25.82 / UTEX 2576).